A 328-amino-acid chain; its full sequence is D-cysteine desulfhydrase (328 aa).

Lysine 51 is subject to N6-(pyridoxal phosphate)lysine.

It belongs to the ACC deaminase/D-cysteine desulfhydrase family. In terms of assembly, homodimer. The cofactor is pyridoxal 5'-phosphate.

It carries out the reaction D-cysteine + H2O = hydrogen sulfide + pyruvate + NH4(+) + H(+). In terms of biological role, catalyzes the alpha,beta-elimination reaction of D-cysteine and of several D-cysteine derivatives. It could be a defense mechanism against D-cysteine. The sequence is that of D-cysteine desulfhydrase from Salmonella schwarzengrund (strain CVM19633).